Here is a 117-residue protein sequence, read N- to C-terminus: Hemerythrin subunit beta (117 aa).

Fe cation contacts are provided by His-24, His-53, Glu-57, His-72, His-76, His-105, and Asp-110.

This sequence belongs to the hemerythrin family. In terms of assembly, octamer composed of two types of chains: alpha and beta.

Hemerythrin is a respiratory protein in blood cells of certain marine worms. The oxygen-binding site in each chain contains two iron atoms. This is Hemerythrin subunit beta from Lingula reevii (Inarticulated brachiopod).